The sequence spans 270 residues: L-aspartate dehydrogenase (270 aa).

Residues alanine 123 and asparagine 191 each contribute to the NAD(+) site. Residue histidine 221 is part of the active site.

The protein belongs to the L-aspartate dehydrogenase family.

It catalyses the reaction L-aspartate + NADP(+) + H2O = oxaloacetate + NH4(+) + NADPH + H(+). The catalysed reaction is L-aspartate + NAD(+) + H2O = oxaloacetate + NH4(+) + NADH + H(+). The protein operates within cofactor biosynthesis; NAD(+) biosynthesis; iminoaspartate from L-aspartate (dehydrogenase route): step 1/1. Its function is as follows. Specifically catalyzes the NAD or NADP-dependent dehydrogenation of L-aspartate to iminoaspartate. The chain is L-aspartate dehydrogenase from Methanocella arvoryzae (strain DSM 22066 / NBRC 105507 / MRE50).